A 604-amino-acid chain; its full sequence is Transcriptional repressor rco-1 (604 aa).

Disordered stretches follow at residues 87–110 (RGGA…PAIG) and 124–264 (GGQA…DRLP). The segment covering 144–163 (MPAPPGLQGPPPPPPPPSQQ) has biased composition (pro residues). Low complexity-rich tracts occupy residues 164–177 (PPFQ…QGPG) and 190–209 (PGPA…PATP). Residues 210-229 (QINTPIPYNGGPAQSPQVPT) show a composition bias toward polar residues. 7 WD repeats span residues 295-324 (QHES…QIYD), 342-372 (TGDL…RVWD), 384-414 (GHEQ…RLWD), 425-455 (SIED…RVWD), 469-499 (GHKD…KMWE), 523-553 (GHRD…QFWD), and 565-600 (GHKN…RIWS).

Functionally, represses transcription by RNA polymerase II. May be involved at several stages of conidiation and other growth and development processes. Appears to regulate genes that are expressed in asexual and sexual spore pathways. This Neurospora crassa (strain ATCC 24698 / 74-OR23-1A / CBS 708.71 / DSM 1257 / FGSC 987) protein is Transcriptional repressor rco-1 (rco-1).